The sequence spans 309 residues: Homoserine O-succinyltransferase (309 aa).

Cys142 serves as the catalytic Acyl-thioester intermediate. Residues Lys163 and Ser192 each contribute to the substrate site. The active-site Proton acceptor is His235. Glu237 is a catalytic residue. A substrate-binding site is contributed by Arg249.

Belongs to the MetA family.

The protein resides in the cytoplasm. It catalyses the reaction L-homoserine + succinyl-CoA = O-succinyl-L-homoserine + CoA. It functions in the pathway amino-acid biosynthesis; L-methionine biosynthesis via de novo pathway; O-succinyl-L-homoserine from L-homoserine: step 1/1. In terms of biological role, transfers a succinyl group from succinyl-CoA to L-homoserine, forming succinyl-L-homoserine. This chain is Homoserine O-succinyltransferase, found in Erwinia tasmaniensis (strain DSM 17950 / CFBP 7177 / CIP 109463 / NCPPB 4357 / Et1/99).